Consider the following 261-residue polypeptide: Probable membrane transporter protein PD_1894 (261 aa).

8 helical membrane-spanning segments follow: residues leucine 6–glycine 26, histidine 45–isoleucine 64, valine 78–isoleucine 98, aspartate 99–leucine 119, alanine 150–alanine 170, threonine 175–leucine 195, tryptophan 205–leucine 225, and valine 239–leucine 259.

The protein belongs to the 4-toluene sulfonate uptake permease (TSUP) (TC 2.A.102) family.

It localises to the cell membrane. This chain is Probable membrane transporter protein PD_1894, found in Xylella fastidiosa (strain Temecula1 / ATCC 700964).